The chain runs to 1588 residues: Pentafunctional AROM polypeptide (1588 aa).

Residues 1 to 392 are 3-dehydroquinate synthase; it reads MVQLAKVPIL…YGDSAQFVSD (392 aa). NAD(+) is bound by residues 43–45, 78–81, 109–111, and D114; these read DTN, ETSK, and GGV. R125 is a binding site for 7-phospho-2-dehydro-3-deoxy-D-arabino-heptonate. Residue 134–135 coordinates NAD(+); sequence TS. The 7-phospho-2-dehydro-3-deoxy-D-arabino-heptonate site is built by D141 and K147. Residue K156 participates in NAD(+) binding. N157 is a 7-phospho-2-dehydro-3-deoxy-D-arabino-heptonate binding site. Residues 174–177 and N185 contribute to the NAD(+) site; that span reads WLET. Residue E189 participates in Zn(2+) binding. 7-phospho-2-dehydro-3-deoxy-D-arabino-heptonate contacts are provided by residues 189-192 and K258; that span reads EVIK. The active-site Proton acceptor; for 3-dehydroquinate synthase activity is E268. Residues 272–276 and H279 contribute to the 7-phospho-2-dehydro-3-deoxy-D-arabino-heptonate site; that span reads RNLLN. H279 serves as a coordination point for Zn(2+). The active-site Proton acceptor; for 3-dehydroquinate synthase activity is H283. Positions 295 and 364 each coordinate 7-phospho-2-dehydro-3-deoxy-D-arabino-heptonate. A Zn(2+)-binding site is contributed by H295. The EPSP synthase stretch occupies residues 405–871; sequence VYPFKDIPAD…WDVLHSELGA (467 aa). The active-site For EPSP synthase activity is C853. Residues 890 to 1080 form a shikimate kinase region; it reads SVVIIGMRAA…IPSGRSAFVC (191 aa). Residue 895–902 coordinates ATP; sequence GMRAAGKT. A 3-dehydroquinase region spans residues 1081-1293; it reads LTFDDLTEQT…AAPGQLTVAQ (213 aa). Residue H1198 is the Proton acceptor; for 3-dehydroquinate dehydratase activity of the active site. The Schiff-base intermediate with substrate; for 3-dehydroquinate dehydratase activity role is filled by K1227. Positions 1306 to 1588 are shikimate dehydrogenase; that stretch reads PKELFVVGKP…KAIFDAVTKE (283 aa).

The protein in the N-terminal section; belongs to the sugar phosphate cyclases superfamily. Dehydroquinate synthase family. In the 2nd section; belongs to the EPSP synthase family. This sequence in the 3rd section; belongs to the shikimate kinase family. It in the 4th section; belongs to the type-I 3-dehydroquinase family. The protein in the C-terminal section; belongs to the shikimate dehydrogenase family. Homodimer. Zn(2+) is required as a cofactor.

It is found in the cytoplasm. The enzyme catalyses 7-phospho-2-dehydro-3-deoxy-D-arabino-heptonate = 3-dehydroquinate + phosphate. It carries out the reaction 3-dehydroquinate = 3-dehydroshikimate + H2O. The catalysed reaction is shikimate + NADP(+) = 3-dehydroshikimate + NADPH + H(+). It catalyses the reaction shikimate + ATP = 3-phosphoshikimate + ADP + H(+). The enzyme catalyses 3-phosphoshikimate + phosphoenolpyruvate = 5-O-(1-carboxyvinyl)-3-phosphoshikimate + phosphate. It functions in the pathway metabolic intermediate biosynthesis; chorismate biosynthesis; chorismate from D-erythrose 4-phosphate and phosphoenolpyruvate: step 2/7. The protein operates within metabolic intermediate biosynthesis; chorismate biosynthesis; chorismate from D-erythrose 4-phosphate and phosphoenolpyruvate: step 3/7. Its pathway is metabolic intermediate biosynthesis; chorismate biosynthesis; chorismate from D-erythrose 4-phosphate and phosphoenolpyruvate: step 4/7. It participates in metabolic intermediate biosynthesis; chorismate biosynthesis; chorismate from D-erythrose 4-phosphate and phosphoenolpyruvate: step 5/7. It functions in the pathway metabolic intermediate biosynthesis; chorismate biosynthesis; chorismate from D-erythrose 4-phosphate and phosphoenolpyruvate: step 6/7. The AROM polypeptide catalyzes 5 consecutive enzymatic reactions in prechorismate polyaromatic amino acid biosynthesis. The polypeptide is Pentafunctional AROM polypeptide (Saccharomyces cerevisiae (strain Lalvin EC1118 / Prise de mousse) (Baker's yeast)).